The following is a 747-amino-acid chain: Tripartite terminase subunit 3 (747 aa).

Positions 194 to 198 (KRAKV) match the Nuclear localization signal motif. The short motif at 267-274 (VPRRHGKT) is the Walker A motif element. The Walker B motif motif lies at 361–366 (LLFVDE). E366 (for ATPase activity) is an active-site residue. Catalysis depends on for nuclease activity residues D521, E593, and D722.

This sequence belongs to the herpesviridae TRM3 protein family. Interacts with the terminase subunits TRM1 and TRM2. Interacts with portal protein.

The protein resides in the host nucleus. In terms of biological role, component of the molecular motor that translocates viral genomic DNA in empty capsid during DNA packaging. Forms a tripartite terminase complex together with TRM1 and TRM2 in the host cytoplasm. Once the complex reaches the host nucleus, it interacts with the capsid portal vertex. This portal forms a ring in which genomic DNA is translocated into the capsid. TRM3 carries an RNase H-like nuclease activity that plays an important role for the cleavage of concatemeric viral DNA into unit length genomes. The sequence is that of Tripartite terminase subunit 3 from Homo sapiens (Human).